The sequence spans 452 residues: Probable 1,4-beta-D-glucan cellobiohydrolase A (452 aa).

The first 17 residues, 1–17, serve as a signal peptide directing secretion; it reads MHQRALLFSALLTAVRA. An N-linked (GlcNAc...) asparagine glycan is attached at N62. E227 (nucleophile) is an active-site residue. Residue E232 is the Proton donor of the active site. 4 N-linked (GlcNAc...) asparagine glycosylation sites follow: N285, N335, N402, and N445.

Belongs to the glycosyl hydrolase 7 (cellulase C) family.

Its subcellular location is the secreted. The enzyme catalyses Hydrolysis of (1-&gt;4)-beta-D-glucosidic linkages in cellulose and cellotetraose, releasing cellobiose from the non-reducing ends of the chains.. The biological conversion of cellulose to glucose generally requires three types of hydrolytic enzymes: (1) Endoglucanases which cut internal beta-1,4-glucosidic bonds; (2) Exocellobiohydrolases that cut the disaccharide cellobiose from the non-reducing end of the cellulose polymer chain; (3) Beta-1,4-glucosidases which hydrolyze the cellobiose and other short cello-oligosaccharides to glucose. In Aspergillus niger (strain ATCC MYA-4892 / CBS 513.88 / FGSC A1513), this protein is Probable 1,4-beta-D-glucan cellobiohydrolase A (cbhA).